The chain runs to 224 residues: Golgi to ER traffic protein 1 (224 aa).

Residues M1 to L33 lie on the Lumenal side of the membrane. The chain crosses the membrane as a helical span at residues L34 to P53. Residues A54–I137 lie on the Cytoplasmic side of the membrane. The stretch at A102–A124 forms a coiled coil. The chain crosses the membrane as a helical span at residues F138–F158. Topologically, residues W159–S182 are lumenal. A helical membrane pass occupies residues V183 to I199. Over V200–A224 the chain is Cytoplasmic.

It belongs to the WRB/GET1 family. Component of the Golgi to ER traffic (GET) complex, which is composed of GET1, GET2 and GET3. Within the complex, GET1 and GET2 form a heterotetramer which is stabilized by phosphatidylinositol binding and which binds to the GET3 homodimer.

It is found in the endoplasmic reticulum membrane. It localises to the golgi apparatus membrane. Functionally, required for the post-translational delivery of tail-anchored (TA) proteins to the endoplasmic reticulum. Together with GET2, acts as a membrane receptor for soluble GET3, which recognizes and selectively binds the transmembrane domain of TA proteins in the cytosol. The GET complex cooperates with the HDEL receptor ERD2 to mediate the ATP-dependent retrieval of resident ER proteins that contain a C-terminal H-D-E-L retention signal from the Golgi to the ER. The chain is Golgi to ER traffic protein 1 from Yarrowia lipolytica (strain CLIB 122 / E 150) (Yeast).